The chain runs to 544 residues: MAAKKLVYGDEARAKLKAGVDKLANAVKVTLGPRGREVILEKKWGSPVVTKDGVSVAKEIELTDPYENMAAQLVKEVASKTADVAGDGTTTATVLTQAIYEEGLKAIASGANPIYVKRGIDEAVKIIVEELKKISKPVTGRKEIEQVATISANNDPEIGKIIADAMEKVGKDGVITVEESKSAETVLEVTEGMQFDRGYLSPYFVTNAEKMEAVLENPYILIYEKKVGNIRELLPVLEKVVQTNKPLLIIAEDVEGEALATLVVNHIKGVLRVCAVKAPGFGERRKAMLQDIAILTGGTAITEDLGIKLESVDLDMLGKADKVVVDKDNTTIIGGKGNPEDIKARIEQIKKQIETTTSEYDKEKLQERLAKLAGGVAIIKVGAATEAELKEKKDRVDDAVHATKAAVEEGIVPGGGIAIFRASRALCNIKEENTDKAWGIKIVKNACKVPLKQIAYNAGFEGSVIIEKIKDVDNVNYGFDAATGEYVDMVEAGIIDPTKVVRTALQNAASIAGTMLTAECLVAEIKEKEEKLPGAGGGMGDMDF.

ATP-binding positions include 30-33 (TLGP), Lys-51, 87-91 (DGTTT), Gly-415, 480-482 (DAA), and Asp-496.

Belongs to the chaperonin (HSP60) family. Forms a cylinder of 14 subunits composed of two heptameric rings stacked back-to-back. Interacts with the co-chaperonin GroES.

It localises to the cytoplasm. The enzyme catalyses ATP + H2O + a folded polypeptide = ADP + phosphate + an unfolded polypeptide.. Its function is as follows. Together with its co-chaperonin GroES, plays an essential role in assisting protein folding. The GroEL-GroES system forms a nano-cage that allows encapsulation of the non-native substrate proteins and provides a physical environment optimized to promote and accelerate protein folding. The chain is Chaperonin GroEL from Sulfurihydrogenibium sp. (strain YO3AOP1).